We begin with the raw amino-acid sequence, 269 residues long: Eukaryotic translation initiation factor 3 subunit G-1 (269 aa).

Residues 188–266 (AAIRISNLSE…LILSVEWSKP (79 aa)) form the RRM domain.

Belongs to the eIF-3 subunit G family. Component of the eukaryotic translation initiation factor 3 (eIF-3) complex. The eIF-3 complex interacts with pix.

It localises to the cytoplasm. Its function is as follows. RNA-binding component of the eukaryotic translation initiation factor 3 (eIF-3) complex, which is involved in protein synthesis of a specialized repertoire of mRNAs and, together with other initiation factors, stimulates binding of mRNA and methionyl-tRNAi to the 40S ribosome. The eIF-3 complex specifically targets and initiates translation of a subset of mRNAs involved in cell proliferation. This subunit can bind 18S rRNA. This Drosophila erecta (Fruit fly) protein is Eukaryotic translation initiation factor 3 subunit G-1.